Reading from the N-terminus, the 70-residue chain is Cold shock-like protein CspF (70 aa).

One can recognise a CSD domain in the interval G7–V67.

It is found in the cytoplasm. The sequence is that of Cold shock-like protein CspF (cspF) from Escherichia coli (strain K12).